The primary structure comprises 212 residues: Phosphoribosylformylglycinamidine synthase subunit PurQ (212 aa).

Residues 2–212 (RIAVLKFPGT…WLGLISWLRR (211 aa)) enclose the Glutamine amidotransferase type-1 domain. C85 serves as the catalytic Nucleophile. Active-site residues include H183, E185, and H191.

Part of the FGAM synthase complex composed of 1 PurL, 1 PurQ and 2 PurS subunits.

It localises to the cytoplasm. The enzyme catalyses N(2)-formyl-N(1)-(5-phospho-beta-D-ribosyl)glycinamide + L-glutamine + ATP + H2O = 2-formamido-N(1)-(5-O-phospho-beta-D-ribosyl)acetamidine + L-glutamate + ADP + phosphate + H(+). It carries out the reaction L-glutamine + H2O = L-glutamate + NH4(+). It functions in the pathway purine metabolism; IMP biosynthesis via de novo pathway; 5-amino-1-(5-phospho-D-ribosyl)imidazole from N(2)-formyl-N(1)-(5-phospho-D-ribosyl)glycinamide: step 1/2. Part of the phosphoribosylformylglycinamidine synthase complex involved in the purines biosynthetic pathway. Catalyzes the ATP-dependent conversion of formylglycinamide ribonucleotide (FGAR) and glutamine to yield formylglycinamidine ribonucleotide (FGAM) and glutamate. The FGAM synthase complex is composed of three subunits. PurQ produces an ammonia molecule by converting glutamine to glutamate. PurL transfers the ammonia molecule to FGAR to form FGAM in an ATP-dependent manner. PurS interacts with PurQ and PurL and is thought to assist in the transfer of the ammonia molecule from PurQ to PurL. The sequence is that of Phosphoribosylformylglycinamidine synthase subunit PurQ from Pyrobaculum aerophilum (strain ATCC 51768 / DSM 7523 / JCM 9630 / CIP 104966 / NBRC 100827 / IM2).